A 223-amino-acid polypeptide reads, in one-letter code: Ribonuclease 3 (223 aa).

The RNase III domain occupies 5–127 (LQRLEKKIGY…IIGAIYLDSD (123 aa)). Residue E40 coordinates Mg(2+). D44 is an active-site residue. Residues D113 and E116 each coordinate Mg(2+). The active site involves E116. A DRBM domain is found at 154–223 (DPKTRLQEYL…AADIALGQLN (70 aa)).

The protein belongs to the ribonuclease III family. In terms of assembly, homodimer. Mg(2+) is required as a cofactor.

It is found in the cytoplasm. The enzyme catalyses Endonucleolytic cleavage to 5'-phosphomonoester.. Its function is as follows. Digests double-stranded RNA. Involved in the processing of primary rRNA transcript to yield the immediate precursors to the large and small rRNAs (23S and 16S). Processes some mRNAs, and tRNAs when they are encoded in the rRNA operon. Processes pre-crRNA and tracrRNA of type II CRISPR loci if present in the organism. The protein is Ribonuclease 3 of Aliivibrio fischeri (strain ATCC 700601 / ES114) (Vibrio fischeri).